Here is a 538-residue protein sequence, read N- to C-terminus: Small ribosomal subunit protein uS3m (538 aa).

The segment at 111–134 (SSEGTEEERNEVRGRGAGKRVESI) is disordered. The segment covering 120 to 134 (NEVRGRGAGKRVESI) has biased composition (basic and acidic residues).

The protein belongs to the universal ribosomal protein uS3 family.

It localises to the mitochondrion. In Oryza sativa subsp. japonica (Rice), this protein is Small ribosomal subunit protein uS3m (RPS3).